Reading from the N-terminus, the 402-residue chain is 4-hydroxy-3-methylbut-2-enyl diphosphate reductase (402 aa).

C66 contacts [4Fe-4S] cluster. Residue H96 coordinates (2E)-4-hydroxy-3-methylbut-2-enyl diphosphate. H96 is a binding site for dimethylallyl diphosphate. H96 is a binding site for isopentenyl diphosphate. C157 serves as a coordination point for [4Fe-4S] cluster. H185 lines the (2E)-4-hydroxy-3-methylbut-2-enyl diphosphate pocket. Residue H185 participates in dimethylallyl diphosphate binding. H185 serves as a coordination point for isopentenyl diphosphate. E187 (proton donor) is an active-site residue. T250 is a binding site for (2E)-4-hydroxy-3-methylbut-2-enyl diphosphate. C288 serves as a coordination point for [4Fe-4S] cluster. S317, S318, N319, and S379 together coordinate (2E)-4-hydroxy-3-methylbut-2-enyl diphosphate. The dimethylallyl diphosphate site is built by S317, S318, N319, and S379. Isopentenyl diphosphate-binding residues include S317, S318, N319, and S379.

It belongs to the IspH family. It depends on [4Fe-4S] cluster as a cofactor.

It catalyses the reaction isopentenyl diphosphate + 2 oxidized [2Fe-2S]-[ferredoxin] + H2O = (2E)-4-hydroxy-3-methylbut-2-enyl diphosphate + 2 reduced [2Fe-2S]-[ferredoxin] + 2 H(+). The enzyme catalyses dimethylallyl diphosphate + 2 oxidized [2Fe-2S]-[ferredoxin] + H2O = (2E)-4-hydroxy-3-methylbut-2-enyl diphosphate + 2 reduced [2Fe-2S]-[ferredoxin] + 2 H(+). It participates in isoprenoid biosynthesis; dimethylallyl diphosphate biosynthesis; dimethylallyl diphosphate from (2E)-4-hydroxy-3-methylbutenyl diphosphate: step 1/1. The protein operates within isoprenoid biosynthesis; isopentenyl diphosphate biosynthesis via DXP pathway; isopentenyl diphosphate from 1-deoxy-D-xylulose 5-phosphate: step 6/6. In terms of biological role, catalyzes the conversion of 1-hydroxy-2-methyl-2-(E)-butenyl 4-diphosphate (HMBPP) into a mixture of isopentenyl diphosphate (IPP) and dimethylallyl diphosphate (DMAPP). Acts in the terminal step of the DOXP/MEP pathway for isoprenoid precursor biosynthesis. This chain is 4-hydroxy-3-methylbut-2-enyl diphosphate reductase, found in Thermosynechococcus vestitus (strain NIES-2133 / IAM M-273 / BP-1).